The sequence spans 65 residues: Large ribosomal subunit protein bL35 (65 aa).

Positions 28-53 (NGSHNLEKKNRKRTRRLHQSTMLDNA) are disordered. The segment covering 36–45 (KNRKRTRRLH) has biased composition (basic residues).

It belongs to the bacterial ribosomal protein bL35 family.

This chain is Large ribosomal subunit protein bL35, found in Chlorobium luteolum (strain DSM 273 / BCRC 81028 / 2530) (Pelodictyon luteolum).